The following is a 130-amino-acid chain: Small ribosomal subunit protein uS9 (130 aa).

Positions 106–130 (RDSRKVERKKPGLKKARKASQFSKR) are disordered. The span at 111–130 (VERKKPGLKKARKASQFSKR) shows a compositional bias: basic residues.

The protein belongs to the universal ribosomal protein uS9 family.

The polypeptide is Small ribosomal subunit protein uS9 (Streptococcus pneumoniae serotype 2 (strain D39 / NCTC 7466)).